The chain runs to 157 residues: NAD(P)H-quinone oxidoreductase subunit N (157 aa).

The protein belongs to the complex I NdhN subunit family. As to quaternary structure, NDH-1 can be composed of about 15 different subunits; different subcomplexes with different compositions have been identified which probably have different functions.

The protein localises to the cellular thylakoid membrane. It carries out the reaction a plastoquinone + NADH + (n+1) H(+)(in) = a plastoquinol + NAD(+) + n H(+)(out). It catalyses the reaction a plastoquinone + NADPH + (n+1) H(+)(in) = a plastoquinol + NADP(+) + n H(+)(out). Its function is as follows. NDH-1 shuttles electrons from an unknown electron donor, via FMN and iron-sulfur (Fe-S) centers, to quinones in the respiratory and/or the photosynthetic chain. The immediate electron acceptor for the enzyme in this species is believed to be plastoquinone. Couples the redox reaction to proton translocation, and thus conserves the redox energy in a proton gradient. Cyanobacterial NDH-1 also plays a role in inorganic carbon-concentration. The polypeptide is NAD(P)H-quinone oxidoreductase subunit N (Synechococcus sp. (strain CC9902)).